The chain runs to 234 residues: Gene 53 protein (234 aa).

The sequence is that of Gene 53 protein (53) from Mycobacterium phage L5 (Mycobacteriophage L5).